The primary structure comprises 282 residues: tRNA pseudouridine synthase B (282 aa).

Asp-39 acts as the Nucleophile in catalysis.

Belongs to the pseudouridine synthase TruB family. Type 1 subfamily.

It catalyses the reaction uridine(55) in tRNA = pseudouridine(55) in tRNA. Responsible for synthesis of pseudouridine from uracil-55 in the psi GC loop of transfer RNAs. The polypeptide is tRNA pseudouridine synthase B (Borreliella burgdorferi (strain ATCC 35210 / DSM 4680 / CIP 102532 / B31) (Borrelia burgdorferi)).